Reading from the N-terminus, the 267-residue chain is Glutamate 5-kinase (267 aa).

Lys14 is a binding site for ATP. Residues Ser54, Asp141, and Asn157 each contribute to the substrate site. ATP contacts are provided by residues 177–178 and 219–225; these read SD and TGGMMSK.

This sequence belongs to the glutamate 5-kinase family.

It localises to the cytoplasm. The catalysed reaction is L-glutamate + ATP = L-glutamyl 5-phosphate + ADP. It functions in the pathway amino-acid biosynthesis; L-proline biosynthesis; L-glutamate 5-semialdehyde from L-glutamate: step 1/2. Its function is as follows. Catalyzes the transfer of a phosphate group to glutamate to form L-glutamate 5-phosphate. This is Glutamate 5-kinase from Streptococcus thermophilus (strain CNRZ 1066).